The chain runs to 90 residues: Large ribosomal subunit protein bL31B (90 aa).

It belongs to the bacterial ribosomal protein bL31 family. Type B subfamily. Part of the 50S ribosomal subunit.

This Pseudomonas fluorescens (strain SBW25) protein is Large ribosomal subunit protein bL31B.